Consider the following 186-residue polypeptide: dCTP deaminase, dUMP-forming (186 aa).

DCTP is bound by residues 99–104, Asp-117, 125–127, Gln-146, Tyr-159, Lys-166, and Gln-170; these read KSSIAR and TLE. Catalysis depends on Glu-127, which acts as the Proton donor/acceptor.

It belongs to the dCTP deaminase family. As to quaternary structure, homotrimer.

The catalysed reaction is dCTP + 2 H2O = dUMP + NH4(+) + diphosphate. It participates in pyrimidine metabolism; dUMP biosynthesis; dUMP from dCTP: step 1/1. In terms of biological role, bifunctional enzyme that catalyzes both the deamination of dCTP to dUTP and the hydrolysis of dUTP to dUMP without releasing the toxic dUTP intermediate. This Methanosphaerula palustris (strain ATCC BAA-1556 / DSM 19958 / E1-9c) protein is dCTP deaminase, dUMP-forming.